A 59-amino-acid chain; its full sequence is Large ribosomal subunit protein uL30 (59 aa).

The protein belongs to the universal ribosomal protein uL30 family. As to quaternary structure, part of the 50S ribosomal subunit.

This Haemophilus ducreyi (strain 35000HP / ATCC 700724) protein is Large ribosomal subunit protein uL30.